Consider the following 121-residue polypeptide: Large ribosomal subunit protein uL14 (121 aa).

Belongs to the universal ribosomal protein uL14 family. As to quaternary structure, part of the 50S ribosomal subunit. Forms a cluster with proteins L3 and L19. In the 70S ribosome, L14 and L19 interact and together make contacts with the 16S rRNA in bridges B5 and B8.

Functionally, binds to 23S rRNA. Forms part of two intersubunit bridges in the 70S ribosome. In Parabacteroides distasonis (strain ATCC 8503 / DSM 20701 / CIP 104284 / JCM 5825 / NCTC 11152), this protein is Large ribosomal subunit protein uL14.